A 234-amino-acid polypeptide reads, in one-letter code: Thioredoxin-dependent peroxide reductase, mitochondrial (234 aa).

The N-terminal 30 residues, 1 to 30, are a transit peptide targeting the mitochondrion; the sequence is MSFVARSLIRNVPLMGKAILSQQKQIAARL. The Thioredoxin domain maps to 40–198; it reads VRVQQPAPDF…VLRLIKAFQF (159 aa). The active-site Cysteine sulfenic acid (-SOH) intermediate is Cys-85.

Belongs to the peroxiredoxin family. AhpC/Prx1 subfamily. As to quaternary structure, homodimer; disulfide-linked, upon oxidation. 6 homodimers assemble to form a ring-like dodecamer. Also exists as a monomer, however the monomeric form is present at a much lower level than the homodimeric form. In terms of tissue distribution, expressed in thoracic flight muscles (at protein level). Detected in the head and body (at protein level).

Its subcellular location is the mitochondrion. The catalysed reaction is a hydroperoxide + [thioredoxin]-dithiol = an alcohol + [thioredoxin]-disulfide + H2O. Thiol-specific peroxidase that catalyzes the reduction of hydrogen peroxide and organic hydroperoxides to water and alcohols, respectively. Plays a role in cell protection against oxidative stress by detoxifying peroxides. May be involved in aging-associated changes in the responsiveness to oxidative stress. Involved in the maintenance of global thiol redox homeostasis. Functions in the central nervous system (CNS) and in motor neurons and is essential for normal motor function. The sequence is that of Thioredoxin-dependent peroxide reductase, mitochondrial from Drosophila melanogaster (Fruit fly).